The sequence spans 235 residues: Class A basic helix-loop-helix protein 9 (235 aa).

2 disordered regions span residues methionine 1 to alanine 69 and glycine 132 to serine 235. The segment covering arginine 55–arginine 67 has biased composition (basic residues). The region spanning alanine 65 to leucine 117 is the bHLH domain.

Heterodimer. Efficient DNA binding requires dimerization with another bHLH protein. Interacts with TCF3, TCF4, and TCF12.

The protein resides in the nucleus. Its subcellular location is the cytoplasm. Its function is as follows. Transcription factor, which play a role in limb development. Is an essential player in the regulatory network governing transcription of genes implicated in limb morphogenesis. The sequence is that of Class A basic helix-loop-helix protein 9 (BHLHA9) from Homo sapiens (Human).